Consider the following 228-residue polypeptide: uncharacterized protein (228 aa).

The first 15 residues, 1–15 (MKQKYLFIASMALAG), serve as a signal peptide directing secretion. Residue Cys-16 is the site of N-palmitoyl cysteine attachment. A lipid anchor (S-diacylglycerol cysteine) is attached at Cys-16.

It to P.multocida PM0015.

It is found in the cell membrane. This is an uncharacterized protein from Pasteurella multocida (strain Pm70).